The following is a 199-amino-acid chain: Pyridoxal 5'-phosphate synthase subunit PdxT (199 aa).

L-glutamine is bound at residue 47–49; it reads GES. The Nucleophile role is filled by cysteine 79. Residues arginine 106 and 133-134 contribute to the L-glutamine site; that span reads IR. Active-site charge relay system residues include histidine 169 and glutamate 171.

This sequence belongs to the glutaminase PdxT/SNO family. In terms of assembly, in the presence of PdxS, forms a dodecamer of heterodimers. Only shows activity in the heterodimer.

The enzyme catalyses aldehydo-D-ribose 5-phosphate + D-glyceraldehyde 3-phosphate + L-glutamine = pyridoxal 5'-phosphate + L-glutamate + phosphate + 3 H2O + H(+). The catalysed reaction is L-glutamine + H2O = L-glutamate + NH4(+). The protein operates within cofactor biosynthesis; pyridoxal 5'-phosphate biosynthesis. Functionally, catalyzes the hydrolysis of glutamine to glutamate and ammonia as part of the biosynthesis of pyridoxal 5'-phosphate. The resulting ammonia molecule is channeled to the active site of PdxS. This chain is Pyridoxal 5'-phosphate synthase subunit PdxT, found in Desulfitobacterium hafniense (strain DSM 10664 / DCB-2).